A 921-amino-acid chain; its full sequence is Isoleucine--tRNA ligase (921 aa).

The 'HIGH' region motif lies at 57-67 (PYANGDIHMGH). Glutamate 552 provides a ligand contact to L-isoleucyl-5'-AMP. The 'KMSKS' region signature appears at 593–597 (KMSKS). Lysine 596 serves as a coordination point for ATP. Zn(2+) contacts are provided by cysteine 888, cysteine 891, cysteine 908, and cysteine 911.

The protein belongs to the class-I aminoacyl-tRNA synthetase family. IleS type 1 subfamily. Monomer. Zn(2+) is required as a cofactor.

It is found in the cytoplasm. It catalyses the reaction tRNA(Ile) + L-isoleucine + ATP = L-isoleucyl-tRNA(Ile) + AMP + diphosphate. Its function is as follows. Catalyzes the attachment of isoleucine to tRNA(Ile). As IleRS can inadvertently accommodate and process structurally similar amino acids such as valine, to avoid such errors it has two additional distinct tRNA(Ile)-dependent editing activities. One activity is designated as 'pretransfer' editing and involves the hydrolysis of activated Val-AMP. The other activity is designated 'posttransfer' editing and involves deacylation of mischarged Val-tRNA(Ile). This Bacillus cereus (strain 03BB102) protein is Isoleucine--tRNA ligase.